The sequence spans 169 residues: Cell division inhibitor SulA (169 aa).

Residues Ala106–Tyr112 form a ftsZ binding region. The interval Lys162–His169 is lon protease binding.

This sequence belongs to the SulA family. As to quaternary structure, interacts with FtsZ. Is rapidly cleaved and degraded by the Lon protease once DNA damage is repaired.

In terms of biological role, component of the SOS system and an inhibitor of cell division. Accumulation of SulA causes rapid cessation of cell division and the appearance of long, non-septate filaments. In the presence of GTP, binds a polymerization-competent form of FtsZ in a 1:1 ratio, thus inhibiting FtsZ polymerization and therefore preventing it from participating in the assembly of the Z ring. This mechanism prevents the premature segregation of damaged DNA to daughter cells during cell division. The chain is Cell division inhibitor SulA from Escherichia coli O7:K1 (strain IAI39 / ExPEC).